Reading from the N-terminus, the 346-residue chain is Zinc finger CCCH domain-containing protein 28 (346 aa).

A disordered region spans residues 1-99 (MASAETPNPD…SPRYPDGKRR (99 aa)). Residues 17-41 (DAAAAADPAAAAPAAAATDPAAAGS) show a composition bias toward low complexity. The span at 62–86 (RSSRSRSRSPRRGRSRSRSRSRSRG) shows a compositional bias: basic residues. C3H1-type zinc fingers lie at residues 103-131 (DLNV…HPHP), 138-165 (DSKV…HPPP), 181-209 (KVKM…HHSP), 211-237 (EDCA…HVMA), 282-308 (NYGV…HPDL), and 314-340 (NTQV…HPPA).

In Oryza sativa subsp. japonica (Rice), this protein is Zinc finger CCCH domain-containing protein 28.